The chain runs to 342 residues: S-adenosylmethionine:tRNA ribosyltransferase-isomerase (342 aa).

This sequence belongs to the QueA family. As to quaternary structure, monomer.

It is found in the cytoplasm. The catalysed reaction is 7-aminomethyl-7-carbaguanosine(34) in tRNA + S-adenosyl-L-methionine = epoxyqueuosine(34) in tRNA + adenine + L-methionine + 2 H(+). It functions in the pathway tRNA modification; tRNA-queuosine biosynthesis. Transfers and isomerizes the ribose moiety from AdoMet to the 7-aminomethyl group of 7-deazaguanine (preQ1-tRNA) to give epoxyqueuosine (oQ-tRNA). The sequence is that of S-adenosylmethionine:tRNA ribosyltransferase-isomerase from Sulfurimonas denitrificans (strain ATCC 33889 / DSM 1251) (Thiomicrospira denitrificans (strain ATCC 33889 / DSM 1251)).